Reading from the N-terminus, the 20-residue chain is Large ribosomal subunit protein uL10 (20 aa).

Belongs to the universal ribosomal protein uL10 family. As to quaternary structure, part of the ribosomal stalk of the 50S ribosomal subunit. The N-terminus interacts with L11 and the large rRNA to form the base of the stalk. The C-terminus forms an elongated spine to which L12 dimers bind in a sequential fashion forming a multimeric L10(L12)X complex.

Its function is as follows. Forms part of the ribosomal stalk, playing a central role in the interaction of the ribosome with GTP-bound translation factors. In Citrobacter freundii, this protein is Large ribosomal subunit protein uL10 (rplJ).